The primary structure comprises 351 residues: Mediator of RNA polymerase II transcription subunit 4 (351 aa).

Positions 30-68 (QKLAEELLAAEAELSKSLKLLETHQNNNARLQQLRQETS) form a coiled coil. Disordered stretches follow at residues 156-217 (TQTQ…PAHL) and 256-351 (PRGY…DEDD). The span at 163–177 (NSFNLSFNGTVSTPI) shows a compositional bias: polar residues. Over residues 182–198 (PTPTTTNDTQPSTQLPP) the composition is skewed to low complexity. The span at 257–308 (RGYDPAEQERRRVAEEKARREAEERARLEREEAERKGREERERMAREREAAR) shows a compositional bias: basic and acidic residues. Positions 262-311 (AEQERRRVAEEKARREAEERARLEREEAERKGREERERMAREREAARLRN) form a coiled coil. The segment covering 340 to 351 (ADDDEDDEDEDD) has biased composition (acidic residues).

The protein belongs to the Mediator complex subunit 4 family. As to quaternary structure, component of the Mediator complex.

It is found in the nucleus. Component of the Mediator complex, a coactivator involved in the regulated transcription of nearly all RNA polymerase II-dependent genes. Mediator functions as a bridge to convey information from gene-specific regulatory proteins to the basal RNA polymerase II transcription machinery. Mediator is recruited to promoters by direct interactions with regulatory proteins and serves as a scaffold for the assembly of a functional preinitiation complex with RNA polymerase II and the general transcription factors. This chain is Mediator of RNA polymerase II transcription subunit 4 (MED4), found in Chaetomium globosum (strain ATCC 6205 / CBS 148.51 / DSM 1962 / NBRC 6347 / NRRL 1970) (Soil fungus).